We begin with the raw amino-acid sequence, 392 residues long: Chalcone synthase-like protein 1 (392 aa).

The active site involves Cys166.

It belongs to the thiolase-like superfamily. Chalcone/stilbene synthases family. Expressed at the same level in leaves and in glandular trichomes.

It is found in the cytoplasm. Functionally, chalcone synthase that may use malonyl-CoA and hexanoyl-CoA as substrates but without producing olivetol or olivetolic acid. The polypeptide is Chalcone synthase-like protein 1 (CAN383) (Cannabis sativa (Hemp)).